Reading from the N-terminus, the 276-residue chain is uncharacterized protein (276 aa).

Tyr47 functions as the Proton donor in the catalytic mechanism. His110 is a binding site for substrate.

Belongs to the aldo/keto reductase family.

It localises to the cytoplasm. It is found in the nucleus. This is an uncharacterized protein from Schizosaccharomyces pombe (strain 972 / ATCC 24843) (Fission yeast).